A 513-amino-acid chain; its full sequence is Butyrophilin subfamily 3 member A1 (513 aa).

The first 29 residues, 1-29, serve as a signal peptide directing secretion; it reads MKMASFLAFLLLNFRVCLLLLQLLMPHSA. Ig-like V-type domains follow at residues 30–139 and 145–236; these read QFSV…KALV and ALGS…ASIS. The Extracellular portion of the chain corresponds to 30-254; the sequence is QFSVLGPSGP…AQRWIAALAG (225 aa). Cystine bridges form between Cys52–Cys126 and Cys166–Cys220. N-linked (GlcNAc...) asparagine glycosylation occurs at Asn115. Residues 255–271 traverse the membrane as a helical segment; the sequence is TLPVLLLLLGGAGYFLW. The Cytoplasmic segment spans residues 272–513; the sequence is QQQEEKKTQF…EPTALTICPA (242 aa). A B30.2/SPRY domain is found at 322–513; that stretch reads RGERHSAYNE…EPTALTICPA (192 aa).

The protein belongs to the immunoglobulin superfamily. BTN/MOG family. In terms of assembly, homodimer. N-glycosylated. Detected on T-cells, natural killer cells, dendritic cells and macrophages (at protein level). Ubiquitous. Highly expressed in heart, pancreas and lung, Moderately expressed in placenta, liver and muscle.

It localises to the cell membrane. Plays a role in T-cell activation and in the adaptive immune response. Regulates the proliferation of activated T-cells. Regulates the release of cytokines and IFNG by activated T-cells. Mediates the response of T-cells toward infected and transformed cells that are characterized by high levels of phosphorylated metabolites, such as isopentenyl pyrophosphate. The protein is Butyrophilin subfamily 3 member A1 (BTN3A1) of Homo sapiens (Human).